The primary structure comprises 210 residues: Guanylate kinase (210 aa).

One can recognise a Guanylate kinase-like domain in the interval 6-184 (GNIYIVVAPS…ARLDLISIVR (179 aa)). 13 to 20 (APSGAGKT) serves as a coordination point for ATP.

Belongs to the guanylate kinase family.

It localises to the cytoplasm. It carries out the reaction GMP + ATP = GDP + ADP. Its function is as follows. Essential for recycling GMP and indirectly, cGMP. In Chromobacterium violaceum (strain ATCC 12472 / DSM 30191 / JCM 1249 / CCUG 213 / NBRC 12614 / NCIMB 9131 / NCTC 9757 / MK), this protein is Guanylate kinase.